The following is a 553-amino-acid chain: Membrane protein insertase YidC (553 aa).

The next 5 membrane-spanning stretches (helical) occupy residues 7-24 (VLWV…DNWQ), 365-385 (WGWA…PLSA), 435-455 (LPVV…LASV), 474-494 (PYFI…SLNP), and 509-529 (PIAF…YYVV).

This sequence belongs to the OXA1/ALB3/YidC family. Type 1 subfamily. Interacts with the Sec translocase complex via SecD. Specifically interacts with transmembrane segments of nascent integral membrane proteins during membrane integration.

It localises to the cell inner membrane. Required for the insertion and/or proper folding and/or complex formation of integral membrane proteins into the membrane. Involved in integration of membrane proteins that insert both dependently and independently of the Sec translocase complex, as well as at least some lipoproteins. Aids folding of multispanning membrane proteins. The protein is Membrane protein insertase YidC of Burkholderia multivorans (strain ATCC 17616 / 249).